The following is a 537-amino-acid chain: CTP synthase (537 aa).

The tract at residues 1 to 265 is amidoligase domain; the sequence is MTKFIFVTGG…GKYLIKRLKL (265 aa). Ser13 lines the CTP pocket. Ser13 lines the UTP pocket. Residue 14 to 19 participates in ATP binding; the sequence is GLGKGI. Tyr54 is a binding site for L-glutamine. Position 71 (Asp71) interacts with ATP. Asp71 and Glu139 together coordinate Mg(2+). CTP-binding positions include 146–148, 186–191, and Lys222; these read DIE and KTKPTQ. UTP contacts are provided by residues 186–191 and Lys222; that span reads KTKPTQ. A Glutamine amidotransferase type-1 domain is found at 290–532; sequence EIAIVGKYVK…VRAAKEYKQE (243 aa). Gly351 provides a ligand contact to L-glutamine. Catalysis depends on Cys378, which acts as the Nucleophile; for glutamine hydrolysis. Residues 379–382, Glu402, and Arg459 contribute to the L-glutamine site; that span reads FGFQ. Catalysis depends on residues His505 and Glu507.

The protein belongs to the CTP synthase family. As to quaternary structure, homotetramer.

It catalyses the reaction UTP + L-glutamine + ATP + H2O = CTP + L-glutamate + ADP + phosphate + 2 H(+). It carries out the reaction L-glutamine + H2O = L-glutamate + NH4(+). The catalysed reaction is UTP + NH4(+) + ATP = CTP + ADP + phosphate + 2 H(+). It participates in pyrimidine metabolism; CTP biosynthesis via de novo pathway; CTP from UDP: step 2/2. Allosterically activated by GTP, when glutamine is the substrate; GTP has no effect on the reaction when ammonia is the substrate. The allosteric effector GTP functions by stabilizing the protein conformation that binds the tetrahedral intermediate(s) formed during glutamine hydrolysis. Inhibited by the product CTP, via allosteric rather than competitive inhibition. Its function is as follows. Catalyzes the ATP-dependent amination of UTP to CTP with either L-glutamine or ammonia as the source of nitrogen. Regulates intracellular CTP levels through interactions with the four ribonucleotide triphosphates. This Pyrococcus horikoshii (strain ATCC 700860 / DSM 12428 / JCM 9974 / NBRC 100139 / OT-3) protein is CTP synthase.